The sequence spans 620 residues: Glutathione-regulated potassium-efflux system protein KefC (620 aa).

Helical transmembrane passes span 4 to 24 (HTLI…PIAV), 26 to 46 (LGLG…PWGL), 54 to 74 (SILH…GLEL), 90 to 110 (GALQ…LLGL), 114 to 134 (VAEL…MQAM), 149 to 169 (FAVL…IPLL), 178 to 198 (MGAF…VVLL), 218 to 238 (VFSA…EEVG), 270 to 290 (GLLL…GTLL), 294 to 314 (LRIV…LWLI), 327 to 347 (WFAV…GAAQ), and 359 to 379 (SLTL…VILN). The RCK N-terminal domain maps to 399-518 (QPRVIIAGFG…AGVEKPERET (120 aa)). The tract at residues 597 to 620 (GWQGTEEGKHTGNMADEPETKPSS) is disordered.

This sequence belongs to the monovalent cation:proton antiporter 2 (CPA2) transporter (TC 2.A.37) family. KefC subfamily. Homodimer. Interacts with the regulatory subunit KefF.

The protein localises to the cell inner membrane. Its function is as follows. Pore-forming subunit of a potassium efflux system that confers protection against electrophiles. Catalyzes K(+)/H(+) antiport. The chain is Glutathione-regulated potassium-efflux system protein KefC from Escherichia coli (strain K12 / MC4100 / BW2952).